A 904-amino-acid chain; its full sequence is Translation initiation factor IF-2 (904 aa).

Disordered regions lie at residues 102 to 122 (TYVKSENEGGGRAAPMTPDEE), 134 to 252 (RQRN…MVAG), and 267 to 316 (HLSA…ERPT). A compositionally biased stretch (basic and acidic residues) spans 134–177 (RQRNLEEQQRLAESDRVRDEAIQRKREEEQAAKDRAEAERKAAE). The segment covering 178–230 (EAAAAASAPAPVADAPKPSAAAPAARLPSSPSSAPRAARPAGASPASRPAAPA) has biased composition (low complexity). Residues 403 to 572 (SRPPVVTIMG…SLQAEVLELK (170 aa)) form the tr-type G domain. The interval 412-419 (GHVDHGKT) is G1. 412 to 419 (GHVDHGKT) lines the GTP pocket. The interval 437 to 441 (GITQH) is G2. Residues 458–461 (DTPG) form a G3 region. GTP-binding positions include 458-462 (DTPGH) and 512-515 (NKID). A G4 region spans residues 512–515 (NKID). Positions 548-550 (SAK) are G5.

The protein belongs to the TRAFAC class translation factor GTPase superfamily. Classic translation factor GTPase family. IF-2 subfamily.

The protein resides in the cytoplasm. Functionally, one of the essential components for the initiation of protein synthesis. Protects formylmethionyl-tRNA from spontaneous hydrolysis and promotes its binding to the 30S ribosomal subunits. Also involved in the hydrolysis of GTP during the formation of the 70S ribosomal complex. The sequence is that of Translation initiation factor IF-2 from Xanthomonas axonopodis pv. citri (strain 306).